A 670-amino-acid polypeptide reads, in one-letter code: Methionine--tRNA ligase (670 aa).

The 'HIGH' region signature appears at 14–24 (PYANGHLHLGH). The Zn(2+) site is built by Cys-145, Cys-148, Cys-158, and Cys-161. Residues 330–334 (KMSKS) carry the 'KMSKS' region motif. Lys-333 contributes to the ATP binding site. The tRNA-binding domain maps to 570 to 670 (DFAKVDLRIA…AGALPGMKVK (101 aa)).

The protein belongs to the class-I aminoacyl-tRNA synthetase family. MetG type 1 subfamily. Homodimer. Zn(2+) is required as a cofactor.

It localises to the cytoplasm. The catalysed reaction is tRNA(Met) + L-methionine + ATP = L-methionyl-tRNA(Met) + AMP + diphosphate. In terms of biological role, is required not only for elongation of protein synthesis but also for the initiation of all mRNA translation through initiator tRNA(fMet) aminoacylation. The protein is Methionine--tRNA ligase of Legionella pneumophila (strain Paris).